The sequence spans 82 residues: uncharacterized protein (82 aa).

This sequence to M.thermoautotrophicum MTH386.

This is an uncharacterized protein from Methanocaldococcus jannaschii (strain ATCC 43067 / DSM 2661 / JAL-1 / JCM 10045 / NBRC 100440) (Methanococcus jannaschii).